A 403-amino-acid polypeptide reads, in one-letter code: MHRIVSVVAPLGFRLQAQPLVQSRPLSSVQDVLRRTPLYDFHLAHGGKMVAFAGWSLPVQYRDSHVDSHLHTRRHCSLFDVSHMLQTKIFGCDRVKLLESVVVGDIAELRPNQGTLSLFTNEAGGILDDLIVSNTSEGHLYVVSNAGCRDKDLALMQDKVKEFQNRGLDVGLEVVENALLALQGPTATQVLQAGVTDDMKKLPFMTSAVMEVFGVSGCRVTRCGYTGEDGVEISVPATGAVHLATTLLKNPEVKLAGLAARDSLRLEAGLCLYGNDIDEHTTPVEGSLSWTLGKRRRIAMDFPGAKIIVPQLKGEVQRRRVGLICEGAPVRAHSPILNTEGTVIGTVTSGCPSPSLKKNVAMGYVPFKYSRPGTQLLVEVRRKQQMTVVSKMPFVPTNYYTLK.

Residues 1–28 constitute a mitochondrion transit peptide; it reads MHRIVSVVAPLGFRLQAQPLVQSRPLSS. The substrate site is built by E232 and R261. An N6-succinyllysine modification is found at K368. Substrate is bound at residue Y399.

It belongs to the GcvT family. As to quaternary structure, the glycine cleavage system is composed of four proteins: P, T, L and H.

The protein localises to the mitochondrion. It catalyses the reaction N(6)-[(R)-S(8)-aminomethyldihydrolipoyl]-L-lysyl-[protein] + (6S)-5,6,7,8-tetrahydrofolate = N(6)-[(R)-dihydrolipoyl]-L-lysyl-[protein] + (6R)-5,10-methylene-5,6,7,8-tetrahydrofolate + NH4(+). The glycine cleavage system catalyzes the degradation of glycine. This chain is Aminomethyltransferase, mitochondrial, found in Mus musculus (Mouse).